The following is a 1068-amino-acid chain: MAAAYLDPNLNHNPSTNAKSRLSTGMERSPGAIERVLRVFHYFESNNEPATWSSNIRHGDATDVRGIIQKIVDSHKVKNVASYGLRLSHLHSEEVHWLHPDIGVSHIREKYEQSHPPEEWKYELRIRYLPKGFVNQFTEDKPTLNFFYQQVKNDYMSEIADQVDQEIALKLGCLEIRRSYGEMRGNALEKKSNYEVLEKDVGLKRFFPKSLLDSVKAKTLRKLIQQTFRQFANLNREESILKFFEILSPVYRYDKECFKCALGSSWIISVELAIGPEEGISYLTDKGSNPTHLADFTQVQTIQYSSSEDKDRKGMLQLKIAGAPEPLTVTAPSLTIAENMADLIDGYCRLVSGASESFIIRPQKEGERALPSIPKLANNEKHGVRPHAVSVSDEFSGDETDDYAEIIDEEDTYTMPSKSYGLDEAGDYEIQRDRIELGRCIGEGQFGDVHQGVYMSPENPAMAVAIKTCKNCTSDSVREKFLQEALTMRQFDHPHIVKLIGVITENPVWIIMELCTLGELRSFLQVRKYSLDLASLILYSYQLSTALAYLESKRFVHRDIAARNVLVSSSDCVKLGDFGLSRYMEDSTYYKASKGKLPIKWMAPESINFRRFTSASDVWMFGVCMWEILMYGVKPFQGVKNNDVIGRIENGERLPMPPNCPPTLYSLMTKCWAYDPSRRPRFTELKAQLSTILEEEKLQQEERMRMESRRQVTVSWDSGGSDEAPPKPSRPGYPSPRSSEGFFPSPQHMMQPNHYQVSGFSVAHGIPSMSGNMYPGQASVLDHMDSWNHRTPDINMWQPSMEDSGPMDMRSLAQVLPTHLMEERLIRQQQEMEEDQRWLEKEERFLKPDVRLSRGSVDHVDGNIQCPAGNQHIYQPVGKPDHVAPPKKPPRPGAPSHLGNLPAHNSPVDGYNEGVKPWRIQPQEISPPPTANLDRTNDKVYENVTGLVKAVIEMSSRIQPAPPEEYVPMVKGVGLALRTLLATVDETIPVLPASTHREIEMAQKLLNSDLAELINKMKLAQQYVMTSLQQEYKKQMLTAAHALAVDAKNLLDVIDQARLKIISHSRPH.

The tract at residues 1 to 26 (MAAAYLDPNLNHNPSTNAKSRLSTGM) is disordered. The segment covering 10-23 (LNHNPSTNAKSRLS) has biased composition (polar residues). Residues 35–355 (RVLRVFHYFE…GYCRLVSGAS (321 aa)) enclose the FERM domain. Tyrosine 403 and tyrosine 413 each carry phosphotyrosine. The region spanning 435–693 (IELGRCIGEG…ELKAQLSTIL (259 aa)) is the Protein kinase domain. Residues 441–447 (IGEGQFG), lysine 467, and 513–515 (ELC) contribute to the ATP site. Residue aspartate 559 is the Proton acceptor of the active site. Phosphotyrosine; by autocatalysis is present on residues tyrosine 589 and tyrosine 590. Residues 699–710 (QQEERMRMESRR) are compositionally biased toward basic and acidic residues. 2 disordered regions span residues 699 to 750 (QQEE…QHMM) and 869 to 912 (GNQH…DGYN). Residues tyrosine 874 and tyrosine 941 each carry the phosphotyrosine modification.

This sequence belongs to the protein kinase superfamily. Tyr protein kinase family. FAK subfamily. In terms of processing, phosphorylated on tyrosine residues; phosphorylated kinase is first detected during gastrulation, suggesting that tyrosine phosphorylation is developmentally regulated.

It is found in the cell junction. The protein localises to the focal adhesion. The protein resides in the cell membrane. Its subcellular location is the cytoplasm. It localises to the cytoskeleton. It is found in the cilium basal body. It carries out the reaction L-tyrosyl-[protein] + ATP = O-phospho-L-tyrosyl-[protein] + ADP + H(+). Functionally, non-receptor protein-tyrosine kinase implicated in signaling pathways involved in cell motility, proliferation and apoptosis. Activated by tyrosine-phosphorylation in response to either integrin clustering induced by cell adhesion or antibody cross-linking, or via G-protein coupled receptor (GPCR) occupancy by ligands such as bombesin or lysophosphatidic acid, or via LDL receptor occupancy. Microtubule-induced dephosphorylation at Tyr-397 is crucial for the induction of focal adhesion disassembly. The protein is Focal adhesion kinase 1 (ptk2) of Xenopus laevis (African clawed frog).